Reading from the N-terminus, the 76-residue chain is Small ribosomal subunit protein bS18 (76 aa).

This sequence belongs to the bacterial ribosomal protein bS18 family. Part of the 30S ribosomal subunit. Forms a tight heterodimer with protein bS6.

Functionally, binds as a heterodimer with protein bS6 to the central domain of the 16S rRNA, where it helps stabilize the platform of the 30S subunit. The sequence is that of Small ribosomal subunit protein bS18 from Mesoplasma florum (strain ATCC 33453 / NBRC 100688 / NCTC 11704 / L1) (Acholeplasma florum).